We begin with the raw amino-acid sequence, 366 residues long: Chorismate synthase (366 aa).

NADP(+)-binding residues include Arg48 and Arg54. FMN-binding positions include 125–127 (RSS), 238–239 (NA), Gly278, 293–297 (KPTSS), and Arg319.

The protein belongs to the chorismate synthase family. Homotetramer. Requires FMNH2 as cofactor.

The catalysed reaction is 5-O-(1-carboxyvinyl)-3-phosphoshikimate = chorismate + phosphate. It participates in metabolic intermediate biosynthesis; chorismate biosynthesis; chorismate from D-erythrose 4-phosphate and phosphoenolpyruvate: step 7/7. Catalyzes the anti-1,4-elimination of the C-3 phosphate and the C-6 proR hydrogen from 5-enolpyruvylshikimate-3-phosphate (EPSP) to yield chorismate, which is the branch point compound that serves as the starting substrate for the three terminal pathways of aromatic amino acid biosynthesis. This reaction introduces a second double bond into the aromatic ring system. In Thiobacillus denitrificans (strain ATCC 25259 / T1), this protein is Chorismate synthase.